We begin with the raw amino-acid sequence, 406 residues long: Arginine biosynthesis bifunctional protein ArgJ (406 aa).

The substrate site is built by threonine 154, lysine 180, threonine 191, glutamate 278, asparagine 401, and threonine 406. Catalysis depends on threonine 191, which acts as the Nucleophile.

It belongs to the ArgJ family. As to quaternary structure, heterotetramer of two alpha and two beta chains.

The protein resides in the cytoplasm. It catalyses the reaction N(2)-acetyl-L-ornithine + L-glutamate = N-acetyl-L-glutamate + L-ornithine. The enzyme catalyses L-glutamate + acetyl-CoA = N-acetyl-L-glutamate + CoA + H(+). It participates in amino-acid biosynthesis; L-arginine biosynthesis; L-ornithine and N-acetyl-L-glutamate from L-glutamate and N(2)-acetyl-L-ornithine (cyclic): step 1/1. The protein operates within amino-acid biosynthesis; L-arginine biosynthesis; N(2)-acetyl-L-ornithine from L-glutamate: step 1/4. Catalyzes two activities which are involved in the cyclic version of arginine biosynthesis: the synthesis of N-acetylglutamate from glutamate and acetyl-CoA as the acetyl donor, and of ornithine by transacetylation between N(2)-acetylornithine and glutamate. The polypeptide is Arginine biosynthesis bifunctional protein ArgJ (Gloeobacter violaceus (strain ATCC 29082 / PCC 7421)).